A 251-amino-acid polypeptide reads, in one-letter code: Triosephosphate isomerase (251 aa).

9–11 is a substrate binding site; it reads NWK. The Electrophile role is filled by H95. E167 functions as the Proton acceptor in the catalytic mechanism. Residues G173, S213, and 234 to 235 contribute to the substrate site; that span reads GG. At S213 the chain carries Phosphoserine.

The protein belongs to the triosephosphate isomerase family. In terms of assembly, homodimer.

The protein localises to the cytoplasm. The enzyme catalyses D-glyceraldehyde 3-phosphate = dihydroxyacetone phosphate. The protein operates within carbohydrate biosynthesis; gluconeogenesis. It functions in the pathway carbohydrate degradation; glycolysis; D-glyceraldehyde 3-phosphate from glycerone phosphate: step 1/1. Involved in the gluconeogenesis. Catalyzes stereospecifically the conversion of dihydroxyacetone phosphate (DHAP) to D-glyceraldehyde-3-phosphate (G3P). The chain is Triosephosphate isomerase from Bacillus cereus (strain AH820).